Reading from the N-terminus, the 100-residue chain is Small ribosomal subunit protein uS14c (100 aa).

This sequence belongs to the universal ribosomal protein uS14 family. In terms of assembly, part of the 30S ribosomal subunit.

It is found in the plastid. It localises to the chloroplast. Functionally, binds 16S rRNA, required for the assembly of 30S particles. This chain is Small ribosomal subunit protein uS14c, found in Psilotum nudum (Whisk fern).